The sequence spans 542 residues: CTP synthase (542 aa).

The interval 1–265 (MARYVFITGG…DDEVLAAFGI (265 aa)) is amidoligase domain. S13 provides a ligand contact to CTP. S13 provides a ligand contact to UTP. ATP contacts are provided by residues 14–19 (SLGKGI) and D71. Mg(2+) contacts are provided by D71 and E139. Residues 146-148 (DIE), 186-191 (KTKPTQ), and K222 each bind CTP. UTP-binding positions include 186–191 (KTKPTQ) and K222. The Glutamine amidotransferase type-1 domain occupies 291–541 (TIAIVGKYTG…IEAATEQSRL (251 aa)). G353 contacts L-glutamine. C380 (nucleophile; for glutamine hydrolysis) is an active-site residue. L-glutamine contacts are provided by residues 381 to 384 (FGMQ), E404, and R469. Residues H514 and E516 contribute to the active site.

This sequence belongs to the CTP synthase family. As to quaternary structure, homotetramer.

It carries out the reaction UTP + L-glutamine + ATP + H2O = CTP + L-glutamate + ADP + phosphate + 2 H(+). The catalysed reaction is L-glutamine + H2O = L-glutamate + NH4(+). The enzyme catalyses UTP + NH4(+) + ATP = CTP + ADP + phosphate + 2 H(+). Its pathway is pyrimidine metabolism; CTP biosynthesis via de novo pathway; CTP from UDP: step 2/2. Allosterically activated by GTP, when glutamine is the substrate; GTP has no effect on the reaction when ammonia is the substrate. The allosteric effector GTP functions by stabilizing the protein conformation that binds the tetrahedral intermediate(s) formed during glutamine hydrolysis. Inhibited by the product CTP, via allosteric rather than competitive inhibition. Functionally, catalyzes the ATP-dependent amination of UTP to CTP with either L-glutamine or ammonia as the source of nitrogen. Regulates intracellular CTP levels through interactions with the four ribonucleotide triphosphates. This is CTP synthase from Rhizobium etli (strain ATCC 51251 / DSM 11541 / JCM 21823 / NBRC 15573 / CFN 42).